The following is a 279-amino-acid chain: B3 domain-containing protein Os05g0481400 (279 aa).

The tract at residues A45–V68 is disordered. The segment at residues F139 to V230 is a DNA-binding region (TF-B3). Acidic residues-rich tracts occupy residues D233–A244 and T252–P262. Residues D233–R279 are disordered. A compositionally biased stretch (basic residues) spans G269 to R279.

Its subcellular location is the nucleus. This is B3 domain-containing protein Os05g0481400 from Oryza sativa subsp. japonica (Rice).